We begin with the raw amino-acid sequence, 478 residues long: Protein nucleotidyltransferase YdiU (478 aa).

Residues glycine 83, glycine 85, arginine 86, lysine 106, aspartate 118, glycine 119, arginine 169, and arginine 176 each coordinate ATP. The active-site Proton acceptor is the aspartate 245. Mg(2+) is bound by residues asparagine 246 and aspartate 255. Aspartate 255 contributes to the ATP binding site.

The protein belongs to the SELO family. The cofactor is Mg(2+). It depends on Mn(2+) as a cofactor.

The catalysed reaction is L-seryl-[protein] + ATP = 3-O-(5'-adenylyl)-L-seryl-[protein] + diphosphate. It carries out the reaction L-threonyl-[protein] + ATP = 3-O-(5'-adenylyl)-L-threonyl-[protein] + diphosphate. It catalyses the reaction L-tyrosyl-[protein] + ATP = O-(5'-adenylyl)-L-tyrosyl-[protein] + diphosphate. The enzyme catalyses L-histidyl-[protein] + UTP = N(tele)-(5'-uridylyl)-L-histidyl-[protein] + diphosphate. The catalysed reaction is L-seryl-[protein] + UTP = O-(5'-uridylyl)-L-seryl-[protein] + diphosphate. It carries out the reaction L-tyrosyl-[protein] + UTP = O-(5'-uridylyl)-L-tyrosyl-[protein] + diphosphate. Nucleotidyltransferase involved in the post-translational modification of proteins. It can catalyze the addition of adenosine monophosphate (AMP) or uridine monophosphate (UMP) to a protein, resulting in modifications known as AMPylation and UMPylation. This is Protein nucleotidyltransferase YdiU from Exiguobacterium sp. (strain ATCC BAA-1283 / AT1b).